A 263-amino-acid polypeptide reads, in one-letter code: Glutamate racemase (263 aa).

Substrate-binding positions include 10–11 and 42–43; these read DS and YG. C73 functions as the Proton donor/acceptor in the catalytic mechanism. Residue 74 to 75 coordinates substrate; sequence NS. Catalysis depends on C183, which acts as the Proton donor/acceptor. 184–185 lines the substrate pocket; it reads TH.

Belongs to the aspartate/glutamate racemases family.

It catalyses the reaction L-glutamate = D-glutamate. Its pathway is cell wall biogenesis; peptidoglycan biosynthesis. Its function is as follows. Provides the (R)-glutamate required for cell wall biosynthesis. The sequence is that of Glutamate racemase from Acidothermus cellulolyticus (strain ATCC 43068 / DSM 8971 / 11B).